Here is a 239-residue protein sequence, read N- to C-terminus: Ribonuclease PH (239 aa).

Phosphate contacts are provided by residues arginine 86 and 124–126; that span reads GTR.

This sequence belongs to the RNase PH family. Homohexameric ring arranged as a trimer of dimers.

The enzyme catalyses tRNA(n+1) + phosphate = tRNA(n) + a ribonucleoside 5'-diphosphate. Functionally, phosphorolytic 3'-5' exoribonuclease that plays an important role in tRNA 3'-end maturation. Removes nucleotide residues following the 3'-CCA terminus of tRNAs; can also add nucleotides to the ends of RNA molecules by using nucleoside diphosphates as substrates, but this may not be physiologically important. Probably plays a role in initiation of 16S rRNA degradation (leading to ribosome degradation) during starvation. This chain is Ribonuclease PH, found in Anaeromyxobacter dehalogenans (strain 2CP-1 / ATCC BAA-258).